The following is a 103-amino-acid chain: Large ribosomal subunit protein bL21 (103 aa).

It belongs to the bacterial ribosomal protein bL21 family. In terms of assembly, part of the 50S ribosomal subunit. Contacts protein L20.

Functionally, this protein binds to 23S rRNA in the presence of protein L20. This Methylococcus capsulatus (strain ATCC 33009 / NCIMB 11132 / Bath) protein is Large ribosomal subunit protein bL21.